Here is a 71-residue protein sequence, read N- to C-terminus: Small ribosomal subunit protein bS21 (71 aa).

This sequence belongs to the bacterial ribosomal protein bS21 family.

The chain is Small ribosomal subunit protein bS21 from Alcanivorax borkumensis (strain ATCC 700651 / DSM 11573 / NCIMB 13689 / SK2).